The following is a 332-amino-acid chain: Phenylalanine--tRNA ligase alpha subunit (332 aa).

E254 provides a ligand contact to Mg(2+).

Belongs to the class-II aminoacyl-tRNA synthetase family. Phe-tRNA synthetase alpha subunit type 1 subfamily. In terms of assembly, tetramer of two alpha and two beta subunits. It depends on Mg(2+) as a cofactor.

Its subcellular location is the cytoplasm. It catalyses the reaction tRNA(Phe) + L-phenylalanine + ATP = L-phenylalanyl-tRNA(Phe) + AMP + diphosphate + H(+). The protein is Phenylalanine--tRNA ligase alpha subunit of Hydrogenovibrio crunogenus (strain DSM 25203 / XCL-2) (Thiomicrospira crunogena).